The chain runs to 368 residues: UDP-N-acetylglucosamine--N-acetylmuramyl-(pentapeptide) pyrophosphoryl-undecaprenol N-acetylglucosamine transferase (368 aa).

Residues 10 to 12, N124, S196, I251, and Q296 each bind UDP-N-acetyl-alpha-D-glucosamine; that span reads TGG.

This sequence belongs to the glycosyltransferase 28 family. MurG subfamily.

The protein resides in the cell membrane. It catalyses the reaction Mur2Ac(oyl-L-Ala-gamma-D-Glu-L-Lys-D-Ala-D-Ala)-di-trans,octa-cis-undecaprenyl diphosphate + UDP-N-acetyl-alpha-D-glucosamine = beta-D-GlcNAc-(1-&gt;4)-Mur2Ac(oyl-L-Ala-gamma-D-Glu-L-Lys-D-Ala-D-Ala)-di-trans,octa-cis-undecaprenyl diphosphate + UDP + H(+). It functions in the pathway cell wall biogenesis; peptidoglycan biosynthesis. Functionally, cell wall formation. Catalyzes the transfer of a GlcNAc subunit on undecaprenyl-pyrophosphoryl-MurNAc-pentapeptide (lipid intermediate I) to form undecaprenyl-pyrophosphoryl-MurNAc-(pentapeptide)GlcNAc (lipid intermediate II). This is UDP-N-acetylglucosamine--N-acetylmuramyl-(pentapeptide) pyrophosphoryl-undecaprenol N-acetylglucosamine transferase from Limosilactobacillus fermentum (strain NBRC 3956 / LMG 18251) (Lactobacillus fermentum).